A 449-amino-acid chain; its full sequence is Rubisco accumulation factor 1.2, chloroplastic (449 aa).

Residues 1 to 61 (MFSLKSLISS…NMIPKNPPAR (61 aa)) constitute a chloroplast transit peptide. The N-terminal alpha-helix stretch occupies residues 75–264 (IPTQFRSLDS…KAKNRLNTEL (190 aa)). Positions 262–288 (TELYGDKEAEKEKEKKKKEEEVKAIRI) form a coiled coil. Residues 288–434 (IPVVRLKFGE…GMVVLVVRPP (147 aa)) form a C-terminal beta sheet region.

It belongs to the RAF family. Homodimer.

The protein localises to the plastid. The protein resides in the chloroplast. Required for assembly or stability of RuBisCO. Acts at a postchaperonin step to fold and/or assemble the large subunit (rbcL) into RuBisCO. RAF1 brackets an rbcL dimer (rbcL(2)), leading to rbcL(8)-RAF1(4) complex formation. In the next step, RBCS displaces RAF1, thus resulting in holoenzyme formation. This chain is Rubisco accumulation factor 1.2, chloroplastic, found in Arabidopsis thaliana (Mouse-ear cress).